Reading from the N-terminus, the 113-residue chain is Single-stranded DNA-binding protein B (113 aa).

An SSB domain is found at 1 to 104 (MFNQVMLVGR…VLADTVRFMD (104 aa)). Y82 is subject to Phosphotyrosine.

Homotetramer. Phosphorylated by YwqD, which increases ssDNA affinity; dephosphorylated by YwqE.

The protein resides in the cytoplasm. Its function is as follows. Not essential for replication of the chromosome, but is required for optimal competence. Binds ssDNA, binding is facilitated by DprA, acts as an accessory factor for homologous DNA strand exchange. This Bacillus subtilis (strain 168) protein is Single-stranded DNA-binding protein B (ssbB).